The primary structure comprises 235 residues: Ribonuclease PH (235 aa).

Phosphate contacts are provided by residues Arg86 and 124–126; that span reads GTR.

It belongs to the RNase PH family. Homohexameric ring arranged as a trimer of dimers.

It carries out the reaction tRNA(n+1) + phosphate = tRNA(n) + a ribonucleoside 5'-diphosphate. In terms of biological role, phosphorolytic 3'-5' exoribonuclease that plays an important role in tRNA 3'-end maturation. Removes nucleotide residues following the 3'-CCA terminus of tRNAs; can also add nucleotides to the ends of RNA molecules by using nucleoside diphosphates as substrates, but this may not be physiologically important. Probably plays a role in initiation of 16S rRNA degradation (leading to ribosome degradation) during starvation. The chain is Ribonuclease PH from Francisella philomiragia subsp. philomiragia (strain ATCC 25017 / CCUG 19701 / FSC 153 / O#319-036).